We begin with the raw amino-acid sequence, 279 residues long: Energy-coupling factor transporter ATP-binding protein EcfA2 (279 aa).

Residues 3–245 (IALENVNFIY…VVFMEEVQLG (243 aa)) form the ABC transporter domain. 40–47 (GHTGSGKS) provides a ligand contact to ATP.

It belongs to the ABC transporter superfamily. Energy-coupling factor EcfA family. In terms of assembly, forms a stable energy-coupling factor (ECF) transporter complex composed of 2 membrane-embedded substrate-binding proteins (S component), 2 ATP-binding proteins (A component) and 2 transmembrane proteins (T component).

The protein localises to the cell membrane. In terms of biological role, ATP-binding (A) component of a common energy-coupling factor (ECF) ABC-transporter complex. Unlike classic ABC transporters this ECF transporter provides the energy necessary to transport a number of different substrates. The protein is Energy-coupling factor transporter ATP-binding protein EcfA2 of Streptococcus pneumoniae serotype 2 (strain D39 / NCTC 7466).